Consider the following 156-residue polypeptide: Small ribosomal subunit protein uS7 (156 aa).

Belongs to the universal ribosomal protein uS7 family. Part of the 30S ribosomal subunit. Contacts proteins S9 and S11.

One of the primary rRNA binding proteins, it binds directly to 16S rRNA where it nucleates assembly of the head domain of the 30S subunit. Is located at the subunit interface close to the decoding center, probably blocks exit of the E-site tRNA. The chain is Small ribosomal subunit protein uS7 from Mesomycoplasma hyopneumoniae (strain 232) (Mycoplasma hyopneumoniae).